The sequence spans 388 residues: Tumor protein p53-inducible protein 13 (388 aa).

The signal sequence occupies residues 1-27 (MVPPPPPPSRLLLVALVGLLSLHEVVA). The Extracellular portion of the chain corresponds to 28–304 (EPAEEAGTRC…ARGPTPRTEE (277 aa)). The helical transmembrane segment at 305–325 (AAWAAMALTFLLVLLTLATLC) threads the bilayer. Residues 326-388 (TRLHRNFRRS…DSGPDSESSD (63 aa)) are Cytoplasmic-facing. The span at 361–372 (PSRRIKRSRRRP) shows a compositional bias: basic residues. Positions 361–388 (PSRRIKRSRRRPLLPPTPDSGPDSESSD) are disordered.

The protein localises to the cell membrane. It localises to the cytoplasm. In terms of biological role, may act as a tumor suppressor. Inhibits tumor cell growth, when overexpressed. This chain is Tumor protein p53-inducible protein 13 (Tp53i13), found in Rattus norvegicus (Rat).